We begin with the raw amino-acid sequence, 1215 residues long: Reverse gyrase 2 (1215 aa).

The RG N-terminal-type zinc-finger motif lies at 3-44; the sequence is GGVNAVYMGLCYNCGGNIDEDRLEKGLPCARCLPSPPRRATP. Residues C13, C16, C31, and C34 each contribute to the Zn(2+) site. ATP-binding positions include Q89 and 106–113; that span reads APTGVGKS. Residues 93–249 form the Helicase ATP-binding domain; the sequence is AKRLVKGDSF…SLVKARLKLY (157 aa). A DEAD box motif is present at residues 209–212; it reads DDVD. The interval 614-1215 is topoisomerase I; it reads VRVKTTLLVV…TGDVMGQSEA (602 aa). Positions 618–783 constitute a Toprim domain; the sequence is TTLLVVESPT…NVRRGRFHEV (166 aa). E624 contacts Mg(2+). The segment at 702–729 adopts an RG C-terminal-type zinc-finger fold; that stretch reads IKRCLDCGAQHTSSSPFCPRCGSPRQVD. Residues C705, C708, C719, and C722 each contribute to the Zn(2+) site. D752 contacts Mg(2+). A Topo IA-type catalytic domain is found at 799–1200; it reads EKSLIEAQKV…SVWRMVDEAV (402 aa). Y943 serves as the catalytic O-(5'-phospho-DNA)-tyrosine intermediate.

The protein in the N-terminal section; belongs to the DEAD box helicase family. DDVD subfamily. In the C-terminal section; belongs to the type IA topoisomerase family. In terms of assembly, monomer. Zn(2+) serves as cofactor. Requires Mg(2+) as cofactor.

Its subcellular location is the cytoplasm. It catalyses the reaction ATP + H2O = ADP + phosphate + H(+). Functionally, modifies the topological state of DNA by introducing positive supercoils in an ATP-dependent process, increasing the linking number in steps of +1. Binds to single-stranded DNA, transiently cleaves and then rejoins the ends, introducing a positive supercoil in the process. The scissile phosphodiester is attacked by the catalytic tyrosine of the enzyme, resulting in the formation of a DNA-(5'-phosphotyrosyl)-enzyme intermediate. Probably involved in rewinding DNA strands in regions of the chromosome that have opened up to allow replication, transcription, DNA repair and/or for DNA protection. The sequence is that of Reverse gyrase 2 from Aeropyrum pernix (strain ATCC 700893 / DSM 11879 / JCM 9820 / NBRC 100138 / K1).